Reading from the N-terminus, the 469-residue chain is MVSQPTTSSGPQFECETGNYHTFCPISCVAWLYQKIEDSFFLVIGTKTCGYFLQNAMGVMIFAEPRYAMAELEEGDVNAKLNAYDELQRLCLQVKKDRNPSVIVWIGTCTTEIIKMDLEGIAPKLEDEIGIPIVVARANGLDYAFTQGEDTVLAAMASRCPAPQEVRSEEEKKERTGGLRTLFSHGKKDEKKAGPAPSEYVDHQPLVLFGSLTDPVVNQLTLELKKQGIRVSGWLPAPRYTELPIVEQGVTYVAGVNPFLSRTASALQRRMRCNLITTPFPIGPDGTRGWIEAICQALGVIPKGLDEREQQIWDALRDDVEFLKGRSVFFMGDNLLEVSMARFLIRCGMIVHEVGIPYMDKRYQQAELELLDRTCRELGHPPVRIVEKPDNYNQIQRIYACKPDLVITGMAHANPLEARGITTKWSVEFTFAMIHGFTNAHDMLKMVRKPLDRNNALKSLGWEKLIQEV.

Cys-24, Cys-49, and Cys-109 together coordinate [4Fe-4S] cluster.

The protein belongs to the BchN/ChlN family. As to quaternary structure, protochlorophyllide reductase is composed of three subunits; ChlL, ChlN and ChlB. Forms a heterotetramer of two ChlB and two ChlN subunits. Requires [4Fe-4S] cluster as cofactor.

It carries out the reaction chlorophyllide a + oxidized 2[4Fe-4S]-[ferredoxin] + 2 ADP + 2 phosphate = protochlorophyllide a + reduced 2[4Fe-4S]-[ferredoxin] + 2 ATP + 2 H2O. It participates in porphyrin-containing compound metabolism; chlorophyll biosynthesis (light-independent). In terms of biological role, component of the dark-operative protochlorophyllide reductase (DPOR) that uses Mg-ATP and reduced ferredoxin to reduce ring D of protochlorophyllide (Pchlide) to form chlorophyllide a (Chlide). This reaction is light-independent. The NB-protein (ChlN-ChlB) is the catalytic component of the complex. This chain is Light-independent protochlorophyllide reductase subunit N, found in Gloeobacter violaceus (strain ATCC 29082 / PCC 7421).